Here is a 110-residue protein sequence, read N- to C-terminus: DNA-directed RNA polymerase subunit omega (110 aa).

The protein belongs to the RNA polymerase subunit omega family. The RNAP catalytic core consists of 2 alpha, 1 beta, 1 beta' and 1 omega subunit. When a sigma factor is associated with the core the holoenzyme is formed, which can initiate transcription.

The catalysed reaction is RNA(n) + a ribonucleoside 5'-triphosphate = RNA(n+1) + diphosphate. In terms of biological role, promotes RNA polymerase assembly. Latches the N- and C-terminal regions of the beta' subunit thereby facilitating its interaction with the beta and alpha subunits. The chain is DNA-directed RNA polymerase subunit omega from Nocardioides sp. (strain ATCC BAA-499 / JS614).